The primary structure comprises 326 residues: Glycine N(alpha)-acyltransferase (326 aa).

This sequence belongs to the acetyltransferase family.

It catalyses the reaction a (3R)-hydroxyacyl-[ACP] + glycine = a lyso-glycine lipid + holo-[ACP] + H(+). It carries out the reaction (3R)-hydroxyhexadecanoyl-[ACP] + glycine = N-[(3R)-3-hydroxyhexadecanoyl]-glycine + holo-[ACP] + H(+). It participates in lipid metabolism. Is involved in the production of glycine lipids (GL), which are phosphorus-free membrane lipids. Catalyzes the first step of GL biosynthesis, i.e. the N-acylation of glycine via addition of a 3-hydroxy fatty acyl group, to form a range of monoacylated glycine (also named lyso-glycine lipids or lyso-GL). As an example, catalyzes the production of commendamide, an N-acylated (3-OH C16:0) derivative of glycine with hemolytic activity and the ability to solubilize cholesterol micelles; this compound can also activate NF-kB through the G-protein coupled receptor GPCR G2A/132. The protein is Glycine N(alpha)-acyltransferase of Phocaeicola vulgatus (strain ATCC 8482 / DSM 1447 / JCM 5826 / CCUG 4940 / NBRC 14291 / NCTC 11154) (Bacteroides vulgatus).